We begin with the raw amino-acid sequence, 357 residues long: Glutamine synthetase root isozyme A (357 aa).

The GS beta-grasp domain occupies 19-99 (IIAEYIWVGG…VICDVYTPAG (81 aa)). A GS catalytic domain is found at 106 to 357 (KRYNAAKIFS…AETTILWKKP (252 aa)).

It belongs to the glutamine synthetase family. Homooctamer.

The protein resides in the cytoplasm. It catalyses the reaction L-glutamate + NH4(+) + ATP = L-glutamine + ADP + phosphate + H(+). In Pisum sativum (Garden pea), this protein is Glutamine synthetase root isozyme A (GS3A).